A 359-amino-acid chain; its full sequence is 4-hydroxy-3-methylbut-2-en-1-yl diphosphate synthase (flavodoxin) (359 aa).

Residues C264, C267, C299, and E306 each coordinate [4Fe-4S] cluster.

It belongs to the IspG family. [4Fe-4S] cluster serves as cofactor.

The catalysed reaction is (2E)-4-hydroxy-3-methylbut-2-enyl diphosphate + oxidized [flavodoxin] + H2O + 2 H(+) = 2-C-methyl-D-erythritol 2,4-cyclic diphosphate + reduced [flavodoxin]. Its pathway is isoprenoid biosynthesis; isopentenyl diphosphate biosynthesis via DXP pathway; isopentenyl diphosphate from 1-deoxy-D-xylulose 5-phosphate: step 5/6. Functionally, converts 2C-methyl-D-erythritol 2,4-cyclodiphosphate (ME-2,4cPP) into 1-hydroxy-2-methyl-2-(E)-butenyl 4-diphosphate. The protein is 4-hydroxy-3-methylbut-2-en-1-yl diphosphate synthase (flavodoxin) of Helicobacter pylori (strain J99 / ATCC 700824) (Campylobacter pylori J99).